A 635-amino-acid polypeptide reads, in one-letter code: Chaperone protein DnaK (635 aa).

Phosphothreonine; by autocatalysis is present on Thr-198. The segment at 598-635 (YAKAQPGEEQAGGAPHEGEAKDEKVVDADFEEVKEDKK) is disordered. Residues 613-624 (HEGEAKDEKVVD) show a composition bias toward basic and acidic residues. Over residues 625–635 (ADFEEVKEDKK) the composition is skewed to acidic residues.

The protein belongs to the heat shock protein 70 family.

Functionally, acts as a chaperone. This is Chaperone protein DnaK from Geotalea uraniireducens (strain Rf4) (Geobacter uraniireducens).